A 380-amino-acid chain; its full sequence is O-methyltransferase ucdC (380 aa).

Residues G222–G223, D247, and R283 contribute to the S-adenosyl-L-methionine site. The active-site Proton acceptor is H287.

This sequence belongs to the class I-like SAM-binding methyltransferase superfamily. Cation-independent O-methyltransferase family. COMT subfamily.

It participates in secondary metabolite biosynthesis. Nonribosomal peptide synthetase that mediates the biosynthesis of usterphenyllins and uscandidusins, p-terphenyl derivatives. Within the pathway, ucdC catalyzes O-methylation of the terphenyl triol intermediate produced by ucdB to yield terphenyllin carrying two methoxy moieties at C-9 and C-12. The pathway begin with the biosynthesis of 4-hydroxyphenylpyruvate (HPPA) from L-tyrosine, possibly by the aminotransferase ucdG. The nonribosomal peptide synthetase ucdA then condenses two HPPA units to produce atromentin. The key step in this pathway is the reduction and dehydration of atromentin to form a terphenyl triol intermediate, performed by the NAD-dependent dehydrogenase ucdB. Further O-methylation by the methyltransferase ucdC forms terphenyllin carrying two methoxy moieties at C-9 and C-12, and subsequent dihydroxylation at C-3 of ring A and C-15 of ring C by the flavin-dependent oxygenase ucdD leads to 3,15-dihydroxyterphenyllin. Prenylation by ucdE at position C-5 of ring A forms usterphenyllin B, and is followed by a second prenylation at position C-14 of ring C to form usterphenyllin A. The following furan ring formation that leads to uscandidusins A and B was proven to be an unexpected spontaneous non-enzymatic reaction. This chain is O-methyltransferase ucdC, found in Aspergillus ustus.